A 235-amino-acid chain; its full sequence is 15,16-dihydrobiliverdin:ferredoxin oxidoreductase (235 aa).

The protein belongs to the HY2 family.

The enzyme catalyses 15,16-dihydrobiliverdin + oxidized 2[4Fe-4S]-[ferredoxin] = biliverdin IXalpha + reduced 2[4Fe-4S]-[ferredoxin] + 2 H(+). In terms of biological role, catalyzes the two-electron reduction of biliverdin IX-alpha at the C15 methine bridge. This Synechococcus sp. (strain CC9902) protein is 15,16-dihydrobiliverdin:ferredoxin oxidoreductase.